We begin with the raw amino-acid sequence, 88 residues long: Acylphosphatase (88 aa).

An Acylphosphatase-like domain is found at 3–88; that stretch reads AVDVLISGRV…RAGHQGFEVR (86 aa). Catalysis depends on residues R18 and N36.

This sequence belongs to the acylphosphatase family.

The enzyme catalyses an acyl phosphate + H2O = a carboxylate + phosphate + H(+). The chain is Acylphosphatase (acyP) from Methanocella arvoryzae (strain DSM 22066 / NBRC 105507 / MRE50).